Reading from the N-terminus, the 599-residue chain is Proline--tRNA ligase (599 aa).

This sequence belongs to the class-II aminoacyl-tRNA synthetase family. ProS type 1 subfamily. Homodimer.

It is found in the cytoplasm. It carries out the reaction tRNA(Pro) + L-proline + ATP = L-prolyl-tRNA(Pro) + AMP + diphosphate. Its function is as follows. Catalyzes the attachment of proline to tRNA(Pro) in a two-step reaction: proline is first activated by ATP to form Pro-AMP and then transferred to the acceptor end of tRNA(Pro). As ProRS can inadvertently accommodate and process non-cognate amino acids such as alanine and cysteine, to avoid such errors it has two additional distinct editing activities against alanine. One activity is designated as 'pretransfer' editing and involves the tRNA(Pro)-independent hydrolysis of activated Ala-AMP. The other activity is designated 'posttransfer' editing and involves deacylation of mischarged Ala-tRNA(Pro). The misacylated Cys-tRNA(Pro) is not edited by ProRS. The polypeptide is Proline--tRNA ligase (Bifidobacterium animalis subsp. lactis (strain AD011)).